Consider the following 68-residue polypeptide: Beta-defensin 1 (68 aa).

Positions 1–21 (MRTSYLLLFTLCLLLSEMASG) are cleaved as a signal peptide. Positions 22-32 (GNFLTGLGHRS) are excised as a propeptide. Intrachain disulfides connect Cys37–Cys66, Cys44–Cys59, and Cys49–Cys67.

It belongs to the beta-defensin family. Monomer. Homodimer.

Its subcellular location is the secreted. The protein resides in the membrane. In terms of biological role, has bactericidal activity. May act as a ligand for C-C chemokine receptor CCR6. Positively regulates the sperm motility and bactericidal activity in a CCR6-dependent manner. Binds to CCR6 and triggers Ca2+ mobilization in the sperm which is important for its motility. This Pongo pygmaeus (Bornean orangutan) protein is Beta-defensin 1 (DEFB1).